Consider the following 36-residue polypeptide: Photosystem II reaction center protein M (36 aa).

A helical transmembrane segment spans residues 5–25 (ILGLIATALFIIIPTSFLLIL).

The protein belongs to the PsbM family. PSII is composed of 1 copy each of membrane proteins PsbA, PsbB, PsbC, PsbD, PsbE, PsbF, PsbH, PsbI, PsbJ, PsbK, PsbL, PsbM, PsbT, PsbX, PsbY, PsbZ, Psb30/Ycf12, at least 3 peripheral proteins of the oxygen-evolving complex and a large number of cofactors. It forms dimeric complexes.

The protein resides in the plastid. It localises to the chloroplast thylakoid membrane. In terms of biological role, one of the components of the core complex of photosystem II (PSII). PSII is a light-driven water:plastoquinone oxidoreductase that uses light energy to abstract electrons from H(2)O, generating O(2) and a proton gradient subsequently used for ATP formation. It consists of a core antenna complex that captures photons, and an electron transfer chain that converts photonic excitation into a charge separation. This subunit is found at the monomer-monomer interface. The sequence is that of Photosystem II reaction center protein M from Chlorokybus atmophyticus (Soil alga).